We begin with the raw amino-acid sequence, 92 residues long: Large ribosomal subunit protein bL34m (92 aa).

The transit peptide at 1–46 (MAVLAGSLLGPTSRSAALLGGRWLQPRAWLGFPDAWGLPTPQQARG) directs the protein to the mitochondrion. Position 71 is a phosphoserine (Ser71).

It belongs to the bacterial ribosomal protein bL34 family. Component of the mitochondrial large ribosomal subunit (mt-LSU). Mature mammalian 55S mitochondrial ribosomes consist of a small (28S) and a large (39S) subunit. The 28S small subunit contains a 12S ribosomal RNA (12S mt-rRNA) and 30 different proteins. The 39S large subunit contains a 16S rRNA (16S mt-rRNA), a copy of mitochondrial valine transfer RNA (mt-tRNA(Val)), which plays an integral structural role, and 52 different proteins.

The protein localises to the mitochondrion. The protein is Large ribosomal subunit protein bL34m (MRPL34) of Homo sapiens (Human).